Here is a 93-residue protein sequence, read N- to C-terminus: MSRHQSYPLFNLEQAGVPDDLCPVATVVSPMLPGDWRSMRPVVDRDKCVKCAVCWLYCPVQCVEEHAAWFDFNLKTCKGCGICANECPQRRSR.

2 4Fe-4S ferredoxin-type domains span residues 39-68 and 66-93; these read MRPV…EHAA and HAAW…RRSR.

In terms of assembly, dimer of heteropentamers composed of an alpha (PadG), a beta (PadI), a gamma (PadE), a delta (PadF) and an epsilon (PadH) subunit. The cofactor is [4Fe-4S] cluster.

It carries out the reaction phenylglyoxylate + NAD(+) + CoA = benzoyl-CoA + CO2 + NADH. Activated by magnesium ions and thiamine diphosphate. Functionally, involved in the anaerobic metabolism of phenylalanine and phenylacetate. Catalyzes the oxidative decarboxylation of phenylglyoxylate to benzoyl-CoA and CO(2). It can also react slowly with 2-oxo-3-methylbutanoate and use different electron acceptors such as benzyl viologen, methyl viologen, FAD or FMN, but NAD seems to be the physiological electron acceptor. Also catalyzes an isotope exchange between CO(2) and the carboxyl group which proves partial or complete reversibility of the oxidative decarboxylation reaction. The chain is NADH-dependent phenylglyoxylate dehydrogenase subunit delta (padF) from Aromatoleum evansii (Azoarcus evansii).